Here is a 230-residue protein sequence, read N- to C-terminus: Ribonuclease 3 (230 aa).

Residues 10 to 133 (DPRLLSRIGY…IIGAIYLDSS (124 aa)) enclose the RNase III domain. Position 46 (Glu46) interacts with Mg(2+). Asp50 is a catalytic residue. The Mg(2+) site is built by Asp119 and Glu122. Residue Glu122 is part of the active site. The DRBM domain maps to 161–230 (DPKSRLQEYL…AAEILKLLEQ (70 aa)).

Belongs to the ribonuclease III family. As to quaternary structure, homodimer. It depends on Mg(2+) as a cofactor.

Its subcellular location is the cytoplasm. The enzyme catalyses Endonucleolytic cleavage to 5'-phosphomonoester.. Its function is as follows. Digests double-stranded RNA. Involved in the processing of primary rRNA transcript to yield the immediate precursors to the large and small rRNAs (23S and 16S). Processes some mRNAs, and tRNAs when they are encoded in the rRNA operon. Processes pre-crRNA and tracrRNA of type II CRISPR loci if present in the organism. The sequence is that of Ribonuclease 3 from Acinetobacter baumannii (strain SDF).